A 579-amino-acid chain; its full sequence is uncharacterized protein (579 aa).

It belongs to the UbiD family.

This is an uncharacterized protein from Chlamydia muridarum (strain MoPn / Nigg).